The primary structure comprises 589 residues: MEEHIRTPIVCVLGHVDHGKTSLLDRIRGSKVVAGEAGAITQHIGATLIPFDSIAKMSGDLGRLKTSVPGLLFIDTPGHHAFTTLRARGGALADIAILVVDVNEGFKQQTIEALQILRTCKTPFVIAATKLDKIPGWRPTPNASFQKAYKNQSERVQTECENRVYELVGKLSDMGFNSERFDRVSDFQRNLVIVPVSSMTGEGIGDLLMIMIGLAQRYLTEGLKTTTSGPGVGTVLEVKEEKGLGTTLDVILYDGIISVGDEIGIAGSDGALSTKVRALLQPRPMKEILIEDQFMRVKSVVAAAGVKISAPNLESIVAGSPIRVIRGDHDEVLAKINEEMQEINIKLSDVGVSVRADTIGALEALSNELDAKNIPIMRASVGPLSRRDLIDISVIKEDLFKVALCFNVPLLPDAEAMVRDEEVDVKIFSNRVIYKLLDDYLEWRDEMIRAKEAKQFETVVLPAKFSILPGCVFRMSGPAVVGVRVLGGTLRPKVSIATRDGKIVGEIKQIKLNKETIGEAKEGAEVAVSIDGVTIGRQIDVGETLYVAIPERHVKVLETEMLSHLNAGTVEALEEYTGIFRKTQPFWGK.

The tr-type G domain occupies 5–219 (IRTPIVCVLG…IMIGLAQRYL (215 aa)). The tract at residues 14 to 21 (GHVDHGKT) is G1. 14-21 (GHVDHGKT) is a GTP binding site. The segment at 39–43 (AITQH) is G2. The tract at residues 75–78 (DTPG) is G3. Residues 75–79 (DTPGH) and 129–132 (TKLD) contribute to the GTP site. Residues 129 to 132 (TKLD) form a G4 region. The tract at residues 197–199 (SSM) is G5.

This sequence belongs to the TRAFAC class translation factor GTPase superfamily. Classic translation factor GTPase family. IF-2 subfamily.

Functionally, function in general translation initiation by promoting the binding of the formylmethionine-tRNA to ribosomes. Seems to function along with eIF-2. The sequence is that of Probable translation initiation factor IF-2 from Methanocorpusculum labreanum (strain ATCC 43576 / DSM 4855 / Z).